The sequence spans 268 residues: Ribosomal RNA small subunit methyltransferase A (268 aa).

Asparagine 18, leucine 20, glycine 45, glutamate 66, aspartate 91, and asparagine 112 together coordinate S-adenosyl-L-methionine.

Belongs to the class I-like SAM-binding methyltransferase superfamily. rRNA adenine N(6)-methyltransferase family. RsmA subfamily.

Its subcellular location is the cytoplasm. It catalyses the reaction adenosine(1518)/adenosine(1519) in 16S rRNA + 4 S-adenosyl-L-methionine = N(6)-dimethyladenosine(1518)/N(6)-dimethyladenosine(1519) in 16S rRNA + 4 S-adenosyl-L-homocysteine + 4 H(+). Its function is as follows. Specifically dimethylates two adjacent adenosines (A1518 and A1519) in the loop of a conserved hairpin near the 3'-end of 16S rRNA in the 30S particle. May play a critical role in biogenesis of 30S subunits. This is Ribosomal RNA small subunit methyltransferase A from Vibrio vulnificus (strain CMCP6).